Here is a 481-residue protein sequence, read N- to C-terminus: Glutamate--tRNA ligase (481 aa).

Positions 9 to 19 (PSPTGNLHIGT) match the 'HIGH' region motif. Residues 247-251 (KLSKR) carry the 'KMSKS' region motif. Position 250 (lysine 250) interacts with ATP.

The protein belongs to the class-I aminoacyl-tRNA synthetase family. Glutamate--tRNA ligase type 1 subfamily. In terms of assembly, monomer.

It localises to the cytoplasm. The enzyme catalyses tRNA(Glu) + L-glutamate + ATP = L-glutamyl-tRNA(Glu) + AMP + diphosphate. Catalyzes the attachment of glutamate to tRNA(Glu) in a two-step reaction: glutamate is first activated by ATP to form Glu-AMP and then transferred to the acceptor end of tRNA(Glu). This is Glutamate--tRNA ligase from Trichormus variabilis (strain ATCC 29413 / PCC 7937) (Anabaena variabilis).